A 306-amino-acid chain; its full sequence is MDRKSSGGCSIMFKSGFIGIIGRPNVGKSTLLNGILGEKLAIITHKPQTTRNRIMGIRNADNAQFIFVDTPGIHSASTPLNRLMVRTATETFTDSDILLLVVEAGQAVHPEDLPIIESLKESGTISFLILNKIDLIRKEQLLPLMDAYRNLHSFAELIPISALTGEGIPLLLDELWKYLPEGPQYFPDDMMTDQSERFLAAEIIREKILLLTHKEIPYSSAVVVDAFKEDEARNLIRISATINVEKESQKGIIIGKKGTMLKEIGTRARVDMEKFFATRIFLELFVRVRKDWTKDPRMLREFGYNE.

The Era-type G domain occupies 14–181 (KSGFIGIIGR…LDELWKYLPE (168 aa)). Positions 22–29 (GRPNVGKS) are G1. 22–29 (GRPNVGKS) contributes to the GTP binding site. The interval 48–52 (QTTRN) is G2. The segment at 69–72 (DTPG) is G3. Residues 69 to 73 (DTPGI) and 131 to 134 (NKID) contribute to the GTP site. The G4 stretch occupies residues 131–134 (NKID). The G5 stretch occupies residues 160–162 (ISA). One can recognise a KH type-2 domain in the interval 212-290 (THKEIPYSSA…FLELFVRVRK (79 aa)).

Belongs to the TRAFAC class TrmE-Era-EngA-EngB-Septin-like GTPase superfamily. Era GTPase family. In terms of assembly, monomer.

It is found in the cytoplasm. Its subcellular location is the cell inner membrane. Functionally, an essential GTPase that binds both GDP and GTP, with rapid nucleotide exchange. Plays a role in 16S rRNA processing and 30S ribosomal subunit biogenesis and possibly also in cell cycle regulation and energy metabolism. This Syntrophus aciditrophicus (strain SB) protein is GTPase Era.